We begin with the raw amino-acid sequence, 115 residues long: SOSS complex subunit C homolog (115 aa).

It belongs to the SOSS-C family.

The sequence is that of SOSS complex subunit C homolog from Drosophila grimshawi (Hawaiian fruit fly).